The chain runs to 515 residues: Histidine ammonia-lyase (515 aa).

The 5-imidazolinone (Ala-Gly) cross-link spans 142–144 (ASG). S143 is modified (2,3-didehydroalanine (Ser)).

This sequence belongs to the PAL/histidase family. Post-translationally, contains an active site 4-methylidene-imidazol-5-one (MIO), which is formed autocatalytically by cyclization and dehydration of residues Ala-Ser-Gly.

The protein localises to the cytoplasm. It catalyses the reaction L-histidine = trans-urocanate + NH4(+). It functions in the pathway amino-acid degradation; L-histidine degradation into L-glutamate; N-formimidoyl-L-glutamate from L-histidine: step 1/3. This chain is Histidine ammonia-lyase, found in Bradyrhizobium sp. (strain BTAi1 / ATCC BAA-1182).